A 360-amino-acid polypeptide reads, in one-letter code: D-alanine--D-alanine ligase (360 aa).

Residues 134 to 343 (KILAQRVGVP…YTELITRLIQ (210 aa)) form the ATP-grasp domain. 169 to 224 (AEKLGHDMFVKPSNQGSSVGVNHVTNAEEYAAALEEAFKYDDKVLVEETVPGTEVE) provides a ligand contact to ATP. Mg(2+) contacts are provided by Asp297, Glu310, and Asn312.

This sequence belongs to the D-alanine--D-alanine ligase family. Mg(2+) is required as a cofactor. Requires Mn(2+) as cofactor.

Its subcellular location is the cytoplasm. The catalysed reaction is 2 D-alanine + ATP = D-alanyl-D-alanine + ADP + phosphate + H(+). It participates in cell wall biogenesis; peptidoglycan biosynthesis. Functionally, cell wall formation. The chain is D-alanine--D-alanine ligase from Lactobacillus acidophilus (strain ATCC 700396 / NCK56 / N2 / NCFM).